The primary structure comprises 1554 residues: MSYEVGTRCWYPDKQQGWIGGEITKHTNLSNKHQLELTLEDNQIVEIESETLDETKDDRLPLLRNPPILEATEDLTSLSYLNEPAVLHAIKARYAQLNIYTYSGIVLIATNPFDRVEQLYSQDMIQAYAGKRRGELEPHLFAIAEEAYRLMKNDKQNQTIVVSGESGAGKTVSAKYIMRYFASVEQNNEENAHHNLEMSETEKKILATNPIMEAFGNAKTTRNDNSSRFGKYLEILFDKEISIIGARIRTYLLERSRLVFQPKSERNYHIFYQLLAGLTNEEKSQLKLTGVEDYHYMNQGGEAQIKGIDDAEEYQTTVEALSLVGISKDTQYQLFKILAALLHIGNVEIKKTRNDASLSSDEPNLAIACELLGIDSFNFAKWITKKQINTRSEKIVSNLNYNQALVARDSVAKFIYSALFEWLVDNINTVLCNPEVASEINSFIGVLDIYGFEHFEKNSFEQFCINYANEKLQQEFNQHVFKLEQEEYVKEEIEWSFIEFNDNQPCIDLIENKLGILSLLDEESRLPAGSDETWTQKLYQTLDKPPTNTVFSKPRFGQTKFVVSHYALDVSYDVEGFIEKNRDTVSDGHLEVLKASTNETLLSILETLDKHAAKLAEKEQVNKKPGPARMVNRKPTLGSIFKQSLIELMGTINSTNVHYIRCIKPNEVKEAWVFDNLMVLSQLRACGVLETIRISCAGFPSRWTYNEFVLRYHILIPSEHWSKMFSSDTTEEDIRDLCRTILGAIVEDKQKYQLGNTKIFFKAGMLAYLEKLRSDRLHNSSVLIQKKVKAVYYRKKYLAIISSIRNFHSRSEGFLTRQRVDLEFKTQAAILIQSMVRSTSTRNKTISLLSAITRLQSLVRKQLAQKELLQRRQRDAAVSIQKKIRAFEPRQSFNTTRRSTVVVQSLVRKKFAQKKLKDLKTEAKSVNHLKEVSYKLENKVIQLTESLAEKVKENKGMTARIQELQQSLNESANIKELLNSQKDEHSKVLQQQKDAHDVQFNEVQEKLVNAKKEVEEAKEEIEQLIAKQDELKAEVRTKIEELNKAKKTFTEFQTQNSDLKNEVKSLKDEIARLQAAVRSGVTSSTITSTPTASRRFSAHSSVADGTSPRQLNVISMNNGGIEDDARSTASALSQINDELYKLLEDTKSLNTEIVEGLLKGFKIPETGVAVELTRKEVLYPARILIIVLSDMWRLGLTKQSESFLAEVLSTIQKLVTNLKGDDMILHGAFWLTNVRELYSFVVFAQESILNDDSYNNGLNEDEYKEYVTLVTELKDDFESLSYNIYNIWLKKLQKDLERKAISAVVMSQSLPGFIAPESSPFLPKLFSQSSHYKMDDILTFFNNIYWSMKTYHVETEVFREVIMTLLKYVDAICFNDLIMRRNFLSWKRGLQLNYNVTRLEEWCKSHQLPEGTECLQHMLQASKLLQLKKANLEDINIIWEICSSLKPAQIQKLISQYAVADYEVPIPQEILNFVADRVKKESSLSSDGKSQTHSSDIFLSVDSGPFEDPFGQIETREFGKIEAYIPAWLNLPITRRVVELVTQHVTVQESQRTE.

Residues 4-57 (EVGTRCWYPDKQQGWIGGEITKHTNLSNKHQLELTLEDNQIVEIESETLDETKD) enclose the Myosin N-terminal SH3-like domain. A Myosin motor domain is found at 70 to 774 (EATEDLTSLS…MLAYLEKLRS (705 aa)). Residue 164–171 (GESGAGKT) participates in ATP binding. Residues 443-523 (FIGVLDIYGF…LGILSLLDEE (81 aa)) are actin-binding. IQ domains follow at residues 778 to 798 (HNSS…KKYL), 800 to 824 (IISS…DLEF), 825 to 847 (KTQA…KTIS), 848 to 872 (LLSA…LQRR), 873 to 895 (QRDA…SFNT), and 896 to 925 (TRRS…EAKS). Residues 926-1079 (VNHLKEVSYK…IARLQAAVRS (154 aa)) adopt a coiled-coil conformation. The tract at residues 1080 to 1554 (GVTSSTITST…VTVQESQRTE (475 aa)) is non alpha-helical, tail domain. Over residues 1082–1093 (TSSTITSTPTAS) the composition is skewed to low complexity. The interval 1082-1109 (TSSTITSTPTASRRFSAHSSVADGTSPR) is disordered. Positions 1098–1109 (AHSSVADGTSPR) are enriched in polar residues. A Dilute domain is found at 1205-1480 (AEVLSTIQKL…LNFVADRVKK (276 aa)).

Belongs to the TRAFAC class myosin-kinesin ATPase superfamily. Myosin family. In terms of assembly, homodimer. Interacts with calmodulin (CMD1) and the myosin light chain MLC1 through its IQ repeats.

In terms of biological role, myosin heavy chain that is required for the cell cycle-regulated transport of various organelles and proteins for their segregation. Functions by binding with its tail domain to receptor proteins on organelles and exerting force with its N-terminal motor domain against actin filaments, thereby transporting its cargo along polarized actin cables. In Lachancea kluyveri (strain ATCC 58438 / CBS 3082 / BCRC 21498 / NBRC 1685 / JCM 7257 / NCYC 543 / NRRL Y-12651) (Yeast), this protein is Myosin-2 (MYO2).